A 391-amino-acid chain; its full sequence is Phosphoglycerate kinase (391 aa).

Residues 21 to 23 (DLN), Arg-36, 59 to 62 (HLGR), Arg-113, and Arg-146 contribute to the substrate site. ATP is bound by residues Lys-197, Glu-319, and 345–348 (GGDT).

It belongs to the phosphoglycerate kinase family. Monomer.

Its subcellular location is the cytoplasm. The catalysed reaction is (2R)-3-phosphoglycerate + ATP = (2R)-3-phospho-glyceroyl phosphate + ADP. It functions in the pathway carbohydrate degradation; glycolysis; pyruvate from D-glyceraldehyde 3-phosphate: step 2/5. The protein is Phosphoglycerate kinase of Xanthomonas oryzae pv. oryzae (strain MAFF 311018).